We begin with the raw amino-acid sequence, 298 residues long: tRNA(Met) cytidine acetate ligase (298 aa).

ATP contacts are provided by residues 6–19 (IAEY…HIYQ), G100, N157, and R182.

The protein belongs to the TmcAL family.

It localises to the cytoplasm. The catalysed reaction is cytidine(34) in elongator tRNA(Met) + acetate + ATP = N(4)-acetylcytidine(34) in elongator tRNA(Met) + AMP + diphosphate. In terms of biological role, catalyzes the formation of N(4)-acetylcytidine (ac(4)C) at the wobble position of elongator tRNA(Met), using acetate and ATP as substrates. First activates an acetate ion to form acetyladenylate (Ac-AMP) and then transfers the acetyl group to tRNA to form ac(4)C34. This Mycoplasmopsis pulmonis (strain UAB CTIP) (Mycoplasma pulmonis) protein is tRNA(Met) cytidine acetate ligase.